Reading from the N-terminus, the 101-residue chain is NAD(P)H-quinone oxidoreductase subunit 4L, chloroplastic (101 aa).

3 consecutive transmembrane segments (helical) span residues 2-22, 32-52, and 61-81; these read MLEH…YGLI, MCLE…SDLF, and IFSI…PAIV.

This sequence belongs to the complex I subunit 4L family. As to quaternary structure, NDH is composed of at least 16 different subunits, 5 of which are encoded in the nucleus.

The protein resides in the plastid. It is found in the chloroplast thylakoid membrane. It carries out the reaction a plastoquinone + NADH + (n+1) H(+)(in) = a plastoquinol + NAD(+) + n H(+)(out). It catalyses the reaction a plastoquinone + NADPH + (n+1) H(+)(in) = a plastoquinol + NADP(+) + n H(+)(out). Functionally, NDH shuttles electrons from NAD(P)H:plastoquinone, via FMN and iron-sulfur (Fe-S) centers, to quinones in the photosynthetic chain and possibly in a chloroplast respiratory chain. The immediate electron acceptor for the enzyme in this species is believed to be plastoquinone. Couples the redox reaction to proton translocation, and thus conserves the redox energy in a proton gradient. This is NAD(P)H-quinone oxidoreductase subunit 4L, chloroplastic from Illicium oligandrum (Star anise).